Here is a 590-residue protein sequence, read N- to C-terminus: Arginine--tRNA ligase (590 aa).

Residues 130–140 carry the 'HIGH' region motif; the sequence is PNIAKEMHVGH.

It belongs to the class-I aminoacyl-tRNA synthetase family. Monomer.

Its subcellular location is the cytoplasm. It carries out the reaction tRNA(Arg) + L-arginine + ATP = L-arginyl-tRNA(Arg) + AMP + diphosphate. The chain is Arginine--tRNA ligase from Synechococcus sp. (strain CC9311).